The primary structure comprises 453 residues: Glutamate-rich protein 5 (453 aa).

3 disordered regions span residues 1-38 (MGCS…ALGR), 66-377 (NGVQ…EHPA), and 394-453 (TNEE…HSML). The span at 11 to 21 (AGDDNRLRSAT) shows a compositional bias: basic and acidic residues. Phosphoserine is present on Ser-155. 2 stretches are compositionally biased toward polar residues: residues 230 to 243 (LQET…SQPL) and 271 to 283 (QETL…SQLR). 3 stretches are compositionally biased toward basic and acidic residues: residues 305 to 332 (EEEK…EHGG), 364 to 374 (IQPERTVESME), and 394 to 403 (TNEEDQHIEG). Acidic residues predominate over residues 404–413 (ETGETVETEM). Positions 414-424 (ESEKVSEGAET) are enriched in basic and acidic residues.

This is Glutamate-rich protein 5 (ERICH5) from Bos taurus (Bovine).